We begin with the raw amino-acid sequence, 326 residues long: Chitinase 12 (326 aa).

Residues 1–21 form the signal peptide; sequence MRALAVVAMVATAFLAAAVHA. The 41-residue stretch at 22–62 folds into the Chitin-binding type-1 domain; that stretch reads EQCGSQAGGAVCPNCLCCSQFGWCGSTSDYCGAGCQSQCSA. 8 disulfides stabilise this stretch: Cys24–Cys39, Cys33–Cys45, Cys36–Cys65, Cys38–Cys52, Cys56–Cys60, Cys102–Cys165, Cys179–Cys187, and Cys286–Cys318. Glu147 (proton donor) is an active-site residue.

The protein belongs to the glycosyl hydrolase 19 family. Chitinase class I subfamily. In terms of tissue distribution, expressed in meristems and at lower levels in roots and sheaths.

The enzyme catalyses Random endo-hydrolysis of N-acetyl-beta-D-glucosaminide (1-&gt;4)-beta-linkages in chitin and chitodextrins.. In terms of biological role, hydrolyzes chitin and plays a role in defense against fungal pathogens containing chitin. Its overexpression confers enhanced resistance to sheath blight pathogen (R.solani). This chain is Chitinase 12 (Cht12), found in Oryza sativa subsp. japonica (Rice).